The chain runs to 270 residues: Glutamate racemase (270 aa).

Residues 14 to 15 (DS) and 46 to 47 (YG) contribute to the substrate site. The active-site Proton donor/acceptor is the Cys77. 78-79 (NT) provides a ligand contact to substrate. The active-site Proton donor/acceptor is Cys189. 190-191 (TH) is a binding site for substrate.

This sequence belongs to the aspartate/glutamate racemases family.

It carries out the reaction L-glutamate = D-glutamate. It functions in the pathway cell wall biogenesis; peptidoglycan biosynthesis. Functionally, provides the (R)-glutamate required for cell wall biosynthesis. The chain is Glutamate racemase from Neisseria gonorrhoeae (strain ATCC 700825 / FA 1090).